We begin with the raw amino-acid sequence, 234 residues long: MAKLTKRMRVIREKVDATKEYGITEAVALLKELATAKFVESVDVAVNLGIDARKSDQNVRGATVLPNGTGRTVRVAVFTQGANAEAATAAGADLVGMEDLAEQVKRGELNFDVVIASPDAMRVVGQLGQILGPRGLMPNPKVGTVTPNVAEAVKNAKAGQVRYRNDKNGIIHSTIGKVDFTEAQLKENLESLLVALKKAKPSTSKGQFIKKVSLSTTMGAGMAVDQASLDTKAA.

It belongs to the universal ribosomal protein uL1 family. In terms of assembly, part of the 50S ribosomal subunit.

In terms of biological role, binds directly to 23S rRNA. The L1 stalk is quite mobile in the ribosome, and is involved in E site tRNA release. Functionally, protein L1 is also a translational repressor protein, it controls the translation of the L11 operon by binding to its mRNA. The chain is Large ribosomal subunit protein uL1 from Tolumonas auensis (strain DSM 9187 / NBRC 110442 / TA 4).